The primary structure comprises 542 residues: Bifunctional pantoate ligase/cytidylate kinase (542 aa).

The tract at residues methionine 1–leucine 280 is pantoate--beta-alanine ligase. Methionine 28–histidine 35 is a binding site for ATP. The active-site Proton donor is histidine 35. Glutamine 59 provides a ligand contact to (R)-pantoate. Beta-alanine is bound at residue glutamine 59. ATP is bound at residue glycine 150–aspartate 153. Glutamine 156 is a (R)-pantoate binding site. ATP-binding positions include valine 179 and cysteine 187–arginine 190. Positions leucine 281–glutamine 542 are cytidylate kinase. The disordered stretch occupies residues glycine 287–proline 311.

In the N-terminal section; belongs to the pantothenate synthetase family. It in the C-terminal section; belongs to the cytidylate kinase family. Type 1 subfamily.

The protein localises to the cytoplasm. It catalyses the reaction (R)-pantoate + beta-alanine + ATP = (R)-pantothenate + AMP + diphosphate + H(+). It carries out the reaction CMP + ATP = CDP + ADP. The enzyme catalyses dCMP + ATP = dCDP + ADP. It participates in cofactor biosynthesis; (R)-pantothenate biosynthesis; (R)-pantothenate from (R)-pantoate and beta-alanine: step 1/1. In terms of biological role, catalyzes the condensation of pantoate with beta-alanine in an ATP-dependent reaction via a pantoyl-adenylate intermediate. Catalyzes the transfer of a phosphate group from ATP to either CMP or dCMP to form CDP or dCDP and ADP, respectively. The protein is Bifunctional pantoate ligase/cytidylate kinase of Synechococcus sp. (strain JA-2-3B'a(2-13)) (Cyanobacteria bacterium Yellowstone B-Prime).